The following is a 513-amino-acid chain: HMG box-containing protein 1 (513 aa).

A disordered region spans residues 151–181 (RPPPVSSAKSGPAFPHDHWKEETPVRHERAN). A compositionally biased stretch (basic and acidic residues) spans 165–181 (PHDHWKEETPVRHERAN). The AXH domain occupies 202–343 (WCNSWPSTVW…PPGHPDAINF (142 aa)). The segment at residues 433 to 501 (CKRPMNAFML…EQKRLNPDCW (69 aa)) is a DNA-binding region (HMG box).

In terms of assembly, binds TCF4. Binds RB1. Binds the second PAH repeat of SIN3A. Ubiquitinated by the CTLH E3 ubiquitin-protein ligase complex, leading to subsequent proteasomal degradation. As to expression, highly expressed in liver, adipose tissue, lung, brain, spleen, kidney, skeletal muscle and heart.

The protein resides in the nucleus. In terms of biological role, transcriptional repressor that binds to the promoter region of target genes. Plays a role in the regulation of the cell cycle and of the Wnt pathway. Binds preferentially to the sequence 5'-TTCATTCATTCA-3'. Binding to the histone H1.0 promoter is enhanced by interaction with RB1. Disrupts the interaction between DNA and TCF4. In Rattus norvegicus (Rat), this protein is HMG box-containing protein 1 (Hbp1).